Consider the following 420-residue polypeptide: Exodeoxyribonuclease 7 large subunit (420 aa).

This sequence belongs to the XseA family. Heterooligomer composed of large and small subunits.

The protein resides in the cytoplasm. It catalyses the reaction Exonucleolytic cleavage in either 5'- to 3'- or 3'- to 5'-direction to yield nucleoside 5'-phosphates.. Functionally, bidirectionally degrades single-stranded DNA into large acid-insoluble oligonucleotides, which are then degraded further into small acid-soluble oligonucleotides. In Helicobacter pylori (strain J99 / ATCC 700824) (Campylobacter pylori J99), this protein is Exodeoxyribonuclease 7 large subunit.